We begin with the raw amino-acid sequence, 515 residues long: Fatty acyl-CoA reductase 1 (515 aa).

Residues 1–465 (MLSIPEFYQG…ARKHLNKLRN (465 aa)) lie on the Cytoplasmic side of the membrane. The helical transmembrane segment at 466 to 484 (IRYGFNTILVVLIWRVFIA) threads the bilayer. Over 485-515 (RSQMARNIWYFVVSMCFKFLSYFRASSTMRY) the chain is Peroxisomal.

The protein belongs to the fatty acyl-CoA reductase family.

It is found in the peroxisome membrane. The enzyme catalyses a long-chain fatty acyl-CoA + 2 NADPH + 2 H(+) = a long-chain primary fatty alcohol + 2 NADP(+) + CoA. It catalyses the reaction hexadecanoyl-CoA + 2 NADPH + 2 H(+) = hexadecan-1-ol + 2 NADP(+) + CoA. It carries out the reaction octadecanoyl-CoA + 2 NADPH + 2 H(+) = octadecan-1-ol + 2 NADP(+) + CoA. The catalysed reaction is (9Z)-octadecenoyl-CoA + 2 NADPH + 2 H(+) = (9Z)-octadecen-1-ol + 2 NADP(+) + CoA. The enzyme catalyses (9Z,12Z)-octadecadienoyl-CoA + 2 NADPH + 2 H(+) = (9Z,12Z)-octadecadien-1-ol + 2 NADP(+) + CoA. It catalyses the reaction eicosanoyl-CoA + 2 NADPH + 2 H(+) = eicosan-1-ol + 2 NADP(+) + CoA. It carries out the reaction 16-methylheptadecanoyl-CoA + 2 NADPH + 2 H(+) = 16-methylheptadecan-1-ol + 2 NADP(+) + CoA. The catalysed reaction is 18-methylnonadecanoyl-CoA + 2 NADPH + 2 H(+) = 18-methylnonadecan-1-ol + 2 NADP(+) + CoA. Functionally, catalyzes the reduction of saturated and unsaturated C16 or C18 fatty acyl-CoA to fatty alcohols. It plays an essential role in the production of ether lipids/plasmalogens which synthesis requires fatty alcohols. In parallel, it is also required for wax monoesters production since fatty alcohols also constitute a substrate for their synthesis. The protein is Fatty acyl-CoA reductase 1 (far1) of Xenopus laevis (African clawed frog).